A 510-amino-acid chain; its full sequence is ATP synthase subunit alpha (510 aa).

170-177 contacts ATP; that stretch reads GDRQTGKT.

This sequence belongs to the ATPase alpha/beta chains family. F-type ATPases have 2 components, CF(1) - the catalytic core - and CF(0) - the membrane proton channel. CF(1) has five subunits: alpha(3), beta(3), gamma(1), delta(1), epsilon(1). CF(0) has three main subunits: a(1), b(2) and c(9-12). The alpha and beta chains form an alternating ring which encloses part of the gamma chain. CF(1) is attached to CF(0) by a central stalk formed by the gamma and epsilon chains, while a peripheral stalk is formed by the delta and b chains.

It is found in the cell inner membrane. It carries out the reaction ATP + H2O + 4 H(+)(in) = ADP + phosphate + 5 H(+)(out). In terms of biological role, produces ATP from ADP in the presence of a proton gradient across the membrane. The alpha chain is a regulatory subunit. This is ATP synthase subunit alpha from Dictyoglomus thermophilum (strain ATCC 35947 / DSM 3960 / H-6-12).